Here is a 241-residue protein sequence, read N- to C-terminus: Ubiquinone biosynthesis O-methyltransferase (241 aa).

S-adenosyl-L-methionine is bound by residues Arg42, Gly62, Asp83, and Met127.

It belongs to the methyltransferase superfamily. UbiG/COQ3 family.

The catalysed reaction is a 3-demethylubiquinol + S-adenosyl-L-methionine = a ubiquinol + S-adenosyl-L-homocysteine + H(+). It catalyses the reaction a 3-(all-trans-polyprenyl)benzene-1,2-diol + S-adenosyl-L-methionine = a 2-methoxy-6-(all-trans-polyprenyl)phenol + S-adenosyl-L-homocysteine + H(+). It participates in cofactor biosynthesis; ubiquinone biosynthesis. Its function is as follows. O-methyltransferase that catalyzes the 2 O-methylation steps in the ubiquinone biosynthetic pathway. The protein is Ubiquinone biosynthesis O-methyltransferase of Pectobacterium atrosepticum (strain SCRI 1043 / ATCC BAA-672) (Erwinia carotovora subsp. atroseptica).